We begin with the raw amino-acid sequence, 111 residues long: uncharacterized protein (111 aa).

The disordered stretch occupies residues 43–72 (NGRAEETEADAPLPEEPSLPDLPDLSDLDS). The segment covering 61-72 (LPDLPDLSDLDS) has biased composition (low complexity).

This is an uncharacterized protein from Homo sapiens (Human).